We begin with the raw amino-acid sequence, 294 residues long: Light-independent protochlorophyllide reductase iron-sulfur ATP-binding protein (294 aa).

Residues 10–15 (GIGKST) and Lys-39 each bind ATP. Ser-14 contacts Mg(2+). Residues Cys-95 and Cys-129 each coordinate [4Fe-4S] cluster. An ATP-binding site is contributed by 180–181 (NR).

It belongs to the NifH/BchL/ChlL family. As to quaternary structure, homodimer. Protochlorophyllide reductase is composed of three subunits; ChlL, ChlN and ChlB. [4Fe-4S] cluster serves as cofactor.

Its subcellular location is the plastid. The protein localises to the chloroplast. The enzyme catalyses chlorophyllide a + oxidized 2[4Fe-4S]-[ferredoxin] + 2 ADP + 2 phosphate = protochlorophyllide a + reduced 2[4Fe-4S]-[ferredoxin] + 2 ATP + 2 H2O. It participates in porphyrin-containing compound metabolism; chlorophyll biosynthesis (light-independent). Component of the dark-operative protochlorophyllide reductase (DPOR) that uses Mg-ATP and reduced ferredoxin to reduce ring D of protochlorophyllide (Pchlide) to form chlorophyllide a (Chlide). This reaction is light-independent. The L component serves as a unique electron donor to the NB-component of the complex, and binds Mg-ATP. The polypeptide is Light-independent protochlorophyllide reductase iron-sulfur ATP-binding protein (Pleurastrum terricola (Filamentous green alga)).